The sequence spans 906 residues: Microtubule-associated protein 6 (906 aa).

The segment at 1–15 (MAWPCITRACCIARF) is calmodulin-binding. 3 S-palmitoyl cysteine lipidation sites follow: cysteine 5, cysteine 10, and cysteine 11. Disordered stretches follow at residues 37-56 (TEHP…ALAP), 65-411 (TQPA…RAVA), 441-651 (KPVK…GPVK), 674-782 (NKDS…TAPR), and 817-906 (AKDQ…EGSP). Residues 41 to 50 (GAPPQPPAPL) are compositionally biased toward pro residues. The span at 93–117 (AAPGRSGLGLGAASASTSGSGPADS) shows a compositional bias: low complexity. Serine 98 carries the phosphoserine modification. The tract at residues 116 to 139 (DSVMRQDYRAWKVQRPEPSCRPRS) is mn 1. Residues 119–139 (MRQDYRAWKVQRPEPSCRPRS) show a composition bias toward basic and acidic residues. A calmodulin-binding region spans residues 124-138 (RAWKVQRPEPSCRPR). Phosphotyrosine is present on tyrosine 141. The segment covering 147–171 (PFERETQYQKDFRAWPLPRRGDHPW) has biased composition (basic and acidic residues). The segment at 151 to 174 (ETQYQKDFRAWPLPRRGDHPWIPK) is mn 2. A calmodulin-binding region spans residues 160 to 174 (AWPLPRRGDHPWIPK). Serine 185 is subject to Phosphoserine. The interval 187-201 (PVLGVPKRRPQSQER) is calmodulin-binding. The residue at position 207 (serine 207) is a Phosphoserine. Residues 222–267 (LAAGKASGVDQRDTRRKAGPAWMVTRNEGHEEKPLPPAQSQTQEGG) form a Mc-1 repeat. The tract at residues 222–405 (LAAGKASGVD…HAQGTGPEGG (184 aa)) is 4 X approximate tandem repeat Mc. Calmodulin-binding regions lie at residues 235–249 (TRRK…TRNE), 280–294 (DTRR…VTRS), 325–339 (RDTR…MVTR), 375–389 (RKAG…SEGH), 435–449 (RAWT…IKAK), 486–500 (RRRI…FKEC), and 513–527 (PKKT…RKAK). Residues 268-313 (PAAGKASGADQRDTRRKAGPAWMVTRSEGHEEKPLPPAQSQTQEGG) form a Mc-2 repeat. The stretch at 314–359 (PAAGKASGADQRDTRRKAGPAWMVTRTEGHEETPLPPAQSQTQEGG) is one Mc-3 repeat. The Mc-4 repeat unit spans residues 360 to 405 (PAAGKASGADERDTRRKAGPAWMVRRSEGHEQTPAAHAQGTGPEGG). A mn 3 region spans residues 427-450 (SSSYRNEFRAWTDIKPVKPIKAKP). A compositionally biased stretch (basic and acidic residues) spans 496–505 (PFKECPKVEK). Residues 512 to 527 (KPKKTSTSHKPPRKAK) show a composition bias toward basic residues. Positions 549 to 573 (KPDDKEQSKEMNNKLAEAKESRVKP) are enriched in basic and acidic residues. 2 positions are modified to phosphoserine: serine 632 and serine 687. Positions 695-711 (KNQSPVVPASTKDQSFP) are enriched in polar residues. A compositionally biased stretch (basic and acidic residues) spans 715 to 742 (PRKDPGPVIPEPEKDRAPTVPERRKDQH). Position 905 is a phosphoserine (serine 905).

Belongs to the STOP family. In terms of assembly, interacts with calmodulin (via C-terminus); the interaction is dependent on Ca(2+). Interacts (via C-terminus) with TMEM106B (via N-terminus). Interacts with ZDHHC13 (via ANK repeats). Interacts with ZDHHC17 (via ANK repeats). Palmitoylated. Probably depalmitoylated by ABHD17A, ABHD17B and ABHD17C. During neuronal polarization, palmitoylation and depalmitoylation cycles regulate MAP6 shuttling between secretory vesicles and microtubules, and its polarized distribution in the axon. In terms of tissue distribution, isoform 1 is specifically expressed in adult brain. Isoform 2 is predominantly expressed in embryonic brain; expression persists at low levels in the adult brain. Isoform 3 is expressed at high levels in lung and at lower levels in testis, heart, muscle and kidney (at protein level). Oligodendrocytes express a major isoform of 89 kDa (O-STOP). Astrocytes also express an isoform of 60 kDa (A-STOP).

It is found in the cytoplasm. Its subcellular location is the cytoskeleton. The protein resides in the golgi apparatus. The protein localises to the cell projection. It localises to the axon. It is found in the dendrite. Its subcellular location is the cytoplasmic vesicle. The protein resides in the secretory vesicle membrane. Functionally, involved in microtubule stabilization in many cell types, including neuronal cells. Specifically has microtubule cold stabilizing activity. Involved in dendrite morphogenesis and maintenance by regulating lysosomal trafficking via its interaction with TMEM106B. Regulates KIF5A-mediated axonal cargo transport. Regulates axonal growth during neuron polarization. The polypeptide is Microtubule-associated protein 6 (Map6) (Mus musculus (Mouse)).